Here is a 491-residue protein sequence, read N- to C-terminus: MKPQCILISLLVNLAYAEEYLVRFKNPTAFQQFTSNSNRSWRQFIDNKIEKKFSIGSFRGVTMNLSKNLVNKLKKSPLVADIVPNFRFEAFEGDSVNSAESSYTFNATAKYSYEDVEEEQNITYQPDAPRHLARISRHYQLPFDVGDKDRYKSWFNYYYEHDYQGQDVNAYIMDTGIFADHPEFEDRVIQGIDLTKEGFGDQNGHGTHVAGLVGSKTYGAAKRVNLVEVKVLGKDGSGEASNVLSGLEFIVEHCTKVSRPQGKKCVANLSLGSFRSPIINMAVEGAIEEGIVFVAAAGNFNLDAYWASPASAENVITVGAFDDHIDTIAKFSNWGPCVNIFAPGVEIESLSHLNYNDTLILSGTSMSTPIVTGVAAILLSKGIEPEMIAQEIEYLSTRNVFHRRTLFFKPSTPNQILYNGVDKLDDPYDDETFPRLNIEAIAKELEEYNATLQTPMSENLQSGSKLWGWNNDVTLPLGEIRLKRRDFMKNL.

The first 17 residues, 1 to 17 (MKPQCILISLLVNLAYA), serve as a signal peptide directing secretion. N-linked (GlcNAc...) asparagine glycosylation is found at asparagine 38, asparagine 64, asparagine 106, and asparagine 121. In terms of domain architecture, Peptidase S8 spans 142–442 (PFDVGDKDRY…FPRLNIEAIA (301 aa)). Active-site charge relay system residues include aspartate 174 and histidine 205. N-linked (GlcNAc...) asparagine glycans are attached at residues asparagine 268 and asparagine 356. The active-site Charge relay system is the serine 365. N-linked (GlcNAc...) asparagine glycosylation occurs at asparagine 449.

Belongs to the peptidase S8 family. N-glycosylated.

Its subcellular location is the spore wall. Functionally, subtilisin-related protease involved in the formation of a protective dityrosine layer required for spore wall assembly. Identified in a screen for mutants with increased levels of rDNA transcription. This is Subtilase-type proteinase RRT12 (RRT12) from Saccharomyces cerevisiae (strain ATCC 204508 / S288c) (Baker's yeast).